A 156-amino-acid polypeptide reads, in one-letter code: Small ribosomal subunit protein uS7 (156 aa).

It belongs to the universal ribosomal protein uS7 family. Part of the 30S ribosomal subunit. Contacts proteins S9 and S11.

One of the primary rRNA binding proteins, it binds directly to 16S rRNA where it nucleates assembly of the head domain of the 30S subunit. Is located at the subunit interface close to the decoding center, probably blocks exit of the E-site tRNA. In Bordetella petrii (strain ATCC BAA-461 / DSM 12804 / CCUG 43448), this protein is Small ribosomal subunit protein uS7.